A 281-amino-acid polypeptide reads, in one-letter code: Protoheme IX farnesyltransferase (281 aa).

9 helical membrane-spanning segments follow: residues 16–36 (TFLLMITFLVSYIVARGGADF), 38–58 (FVIAAISMFLAISGTTAINMW), 75–95 (VPAGILKPSECAAFGAAIFAI), 101–121 (FLVSLEFGLVVFFGLFFDIVV), 129–149 (KSPYSIVLGGFAGAMPALGGW), 150–170 (VAVQGFTLPGFIIAAIVLLWI), 202–224 (ASWAIVFATAAMLVLAASLYVLL), 228–250 (IFYLVISTSAVAFFLYKAVKFAL), and 261–281 (YKLASMTLGLVYFSLLLGVFL).

This sequence belongs to the UbiA prenyltransferase family. Protoheme IX farnesyltransferase subfamily.

Its subcellular location is the cell membrane. The catalysed reaction is heme b + (2E,6E)-farnesyl diphosphate + H2O = Fe(II)-heme o + diphosphate. It participates in porphyrin-containing compound metabolism; heme O biosynthesis; heme O from protoheme: step 1/1. Converts heme B (protoheme IX) to heme O by substitution of the vinyl group on carbon 2 of heme B porphyrin ring with a hydroxyethyl farnesyl side group. This chain is Protoheme IX farnesyltransferase, found in Archaeoglobus fulgidus (strain ATCC 49558 / DSM 4304 / JCM 9628 / NBRC 100126 / VC-16).